The following is a 536-amino-acid chain: MEKRLIIAVVLSIGVLYAYSFIFPTPKPVPTPGGKQAAMSSATAPAPSVAALPIAGTTPVAAPAPQAGQAPAVAKDVTVDTDLYTAVFSTQGGGLKKFVLKKYKETAGPQGKDIVLVNETAANRYALLSDSREFGISPNALYSASTGEVKVTDGGKGSLELTTTTSQGITFRKVYTFSGDAYRIGLTEEVQNVGNVALTGAVHLLQTSRVVDAKKEGRYEVYSPSTLAEGKVKLDDLEDLQKTPVQYGKDIAWSAFADKYFVDGIIADKGSISQVRITRPANDAILRDVASPTVSVAPGQRSAINYAIYYGPKDLDILKLQGSRFEEVIDYGWFGPIAKPLIYSLKFLYKYTGNYGIAIIIITFILKLVFFPLTHKSYKSMKDMQKLQPKMTELKEKFKNDRDAMNRAVMELYKTHKVNPLGGCLPMLVQIPVFFGLYRALMYSIELRHAPFYLWITDLSAKDPYYVTPIIMGATMFIQQKMTPTNMDPVQAKMMLMLPIVFTFMFLNFPSGLVIYWLVNNVLTIAQQMYINKTVE.

4 helical membrane-spanning segments follow: residues 5–25, 353–373, 418–438, and 495–515; these read LIIA…IFPT, GNYG…FFPL, VNPL…FGLY, and MLML…GLVI.

Belongs to the OXA1/ALB3/YidC family. Type 1 subfamily. In terms of assembly, interacts with the Sec translocase complex via SecD. Specifically interacts with transmembrane segments of nascent integral membrane proteins during membrane integration.

Its subcellular location is the cell inner membrane. Required for the insertion and/or proper folding and/or complex formation of integral membrane proteins into the membrane. Involved in integration of membrane proteins that insert both dependently and independently of the Sec translocase complex, as well as at least some lipoproteins. Aids folding of multispanning membrane proteins. The polypeptide is Membrane protein insertase YidC (Geobacter sp. (strain M21)).